The chain runs to 62 residues: Pro-MCH variant (62 aa).

Residues 23–41 form an NGE-like region; sequence GSVAFPAENGVQDTESTQE. The interval 28 to 62 is disordered; that stretch reads PAENGVQDTESTQEKRETGDEENSAQFPIGRRDFD. An NEI-like region spans residues 44 to 56; the sequence is ETGDEENSAQFPI. The segment at 60–62 is melanin-concentrating hormone-like; sequence DFD.

This sequence belongs to the melanin-concentrating hormone family.

This is Pro-MCH variant (PMCHL1) from Hylobates lar (Lar gibbon).